The sequence spans 154 residues: uncharacterized protein (154 aa).

A run of 2 helical transmembrane segments spans residues 54-74 (FLITNLIFFFAAFVALLIYLL) and 81-101 (FAFVFIAAIIFIIFYNIFFLS).

It is found in the cell membrane. This is an uncharacterized protein from Mycoplasma genitalium (strain ATCC 33530 / DSM 19775 / NCTC 10195 / G37) (Mycoplasmoides genitalium).